The primary structure comprises 462 residues: Cysteine proteinase RD21A (462 aa).

The N-terminal stretch at 1–21 is a signal peptide; sequence MGFLKPTMAILFLAMVAVSSA. The propeptide at 22–136 is activation peptide; it reads VDMSIISYDE…LRYEARVGDE (115 aa). Asn-90 carries N-linked (GlcNAc...) asparagine glycosylation. Disulfide bonds link Cys-158–Cys-200, Cys-192–Cys-233, Cys-291–Cys-342, Cys-375–Cys-387, and Cys-381–Cys-402. Residue Cys-161 is part of the active site. Active-site residues include His-297 and Asn-317. The propeptide at 353–462 is removed in mature form; it reads KNGENPPNPG…FWSQGRKNIA (110 aa). N-linked (GlcNAc...) asparagine glycosylation occurs at Asn-414.

Belongs to the peptidase C1 family. Interacts with SERPIN1. Interacts with PRN2. Interacts with WSCP. Interacts with TZF4, TZF5 and TZF6.

The protein localises to the vacuole. The protein resides in the golgi apparatus. It is found in the cytoplasm. Its subcellular location is the stress granule. It localises to the P-body. Inhibited by the cysteine protease inhibitor E64 (L-trans-epoxysuccinyl-leucylamide-(4-guanido)-butane). Cysteine protease that plays a role in immunity, senescence, and biotic and abiotic stresses. Involved in immunity against the necrotrophic fungal pathogen Botrytis cinerea. Involved in elicitor-stimulated programmed cell death (PCD). During infection by the necrotrophic fungal pathogen Botrytis cinerea, functions as a PCD-promoting protease that is released from the ER body or vacuole to the cytoplasm. Accumulates in endoplasmic reticulum-derived bodies in epidermal cells and may participate in cell death in stressed or injured cells. Involved in water stress-induced cell death through its protease activity that is released to the cytoplasm after vacuolar collapse. Possesses protease activity in vitro and is involved in cell death in the transmitting tract and septum epidermis during flower development. Possesses peptide ligase activity. Can ligate peptides to unmodified N-termini of acceptor proteins. Probably ligates through a thioester intermediate. This chain is Cysteine proteinase RD21A, found in Arabidopsis thaliana (Mouse-ear cress).